Reading from the N-terminus, the 760-residue chain is Cyclin-D-binding Myb-like transcription factor 1 (760 aa).

The interval 1-237 is interaction with CCND2; sequence MSTVEEDSDT…TPEEIEKLKE (237 aa). Residues 24 to 63 are disordered; that stretch reads DTDGNLILHCPQNDPDEIDSEDSTEPPHKRLCLSSEDDQS. A compositionally biased stretch (acidic residues) spans 37–47; it reads DPDEIDSEDST. The tract at residues 87 to 170 is required for transcriptional activation; it reads VTMTATTEVA…IDILMNNIER (84 aa). The segment at 87-458 is required for DNA-binding; that stretch reads VTMTATTEVA…DNTAISPSPM (372 aa). Positions 176-690 are interaction with CCND1, CCND2 and CCND3; the sequence is GIKDATEIIF…PTIVHQVHQT (515 aa). A Myb-like 1 domain is found at 225-263; the sequence is GKYTPEEIEKLKELRIKHGNDWATIGAALGRSASSVKDR. One can recognise an HTH myb-type domain in the interval 268-333; sequence KDTCNTGKWT…KWLNYLNWKQ (66 aa). The H-T-H motif DNA-binding region spans 306-329; the sequence is WAAVAERVGTRSEKQCRSKWLNYL. The Myb-like 2 domain occupies 339-388; that stretch reads WTKEDEINLILRIAELDVADENDINWDLLAEGWSSVRSPQWLRSKWWTIK. A required for transcriptional activation region spans residues 459–760; the sequence is AALQIPVQIT…KDVEDLVNCH (302 aa). 2 disordered regions span residues 593 to 614 and 738 to 760; these read DSDL…DTFP and IGSS…VNCH.

This sequence belongs to the DMTF1 family. Interacts with the D-type cyclins CCND1, CCND2 and CCND3. Interaction with D-type cyclins may modulate transcriptional activation by this protein. Phosphorylated by the cyclin-D2/CDK4, cyclin-D3/CDK4 and cyclin-D2/CDK6 complexes and to a lesser extent by the cyclin-D1/CDK4 complex.

It is found in the nucleus. Its function is as follows. Transcriptional activator which activates the CDKN2A/ARF locus in response to Ras-Raf signaling, thereby promoting p53/TP53-dependent growth arrest. Binds to the consensus sequence 5'-CCCG[GT]ATGT-3'. The protein is Cyclin-D-binding Myb-like transcription factor 1 (Dmtf1) of Rattus norvegicus (Rat).